Reading from the N-terminus, the 568-residue chain is TWiK family of potassium channels protein 9 (568 aa).

Residues 1–15 are Cytoplasmic-facing; the sequence is MKCSFHIPEKYQWAS. The chain crosses the membrane as a helical span at residues 16-36; the sequence is TLFVHVALIAGVAVYTVFGAL. Positions 163–183 form an intramembrane region, pore-forming; the sequence is IGNSVIFAFTVITTIGYGHVA. A helical transmembrane segment spans residues 191–211; the sequence is LFLIFYGVIGVPFTLLTIADL. Topologically, residues 212 to 316 are cytoplasmic; the sequence is GMFLTRFLKN…NNEPRKTEES (105 aa). Disordered regions lie at residues 243-262 and 274-314; these read QRNK…RSEV and MRTA…RKTE. A compositionally biased stretch (acidic residues) spans 297–307; sequence GKEEDEEEPEN. The chain crosses the membrane as a helical span at residues 317-337; that stretch reads IALGITFTCYLVAGAKILSVY. Residues 343 to 363 constitute an intramembrane region (pore-forming); the sequence is FFKALYFNFVTLTTIGLGDFV. Residues 370–390 form a helical membrane-spanning segment; it reads LLITLIYIGIGLALTTMAIEI. Residues 391 to 568 lie on the Cytoplasmic side of the membrane; that stretch reads AADLLKKLHY…LRTYTNARRK (178 aa).

This sequence belongs to the two pore domain potassium channel (TC 1.A.1.8) family. Expressed in ray A-type neurons and cell bodies. Also seen in head, pharyngeal and phasmid neurons, and in coelomocytes.

The protein resides in the membrane. Potassium channel protein that may be component of regulatory network that controls ray development and function. The polypeptide is TWiK family of potassium channels protein 9 (twk-9) (Caenorhabditis elegans).